The primary structure comprises 77 residues: Small ribosomal subunit protein bS18 (77 aa).

Belongs to the bacterial ribosomal protein bS18 family. As to quaternary structure, part of the 30S ribosomal subunit. Forms a tight heterodimer with protein bS6.

Functionally, binds as a heterodimer with protein bS6 to the central domain of the 16S rRNA, where it helps stabilize the platform of the 30S subunit. The chain is Small ribosomal subunit protein bS18 from Halalkalibacterium halodurans (strain ATCC BAA-125 / DSM 18197 / FERM 7344 / JCM 9153 / C-125) (Bacillus halodurans).